A 299-amino-acid chain; its full sequence is Tyrosine recombinase XerC (299 aa).

The region spanning 1-81 (MDEAIRRFIE…SWRQFYHWLQ (81 aa)) is the Core-binding (CB) domain. The Tyr recombinase domain occupies 102–281 (LLPKALPVDG…DFQHLAKVYD (180 aa)). Residues Arg142, Lys166, His233, Arg236, and His259 contribute to the active site. The O-(3'-phospho-DNA)-tyrosine intermediate role is filled by Tyr268.

The protein belongs to the 'phage' integrase family. XerC subfamily. In terms of assembly, forms a cyclic heterotetrameric complex composed of two molecules of XerC and two molecules of XerD.

The protein localises to the cytoplasm. Its function is as follows. Site-specific tyrosine recombinase, which acts by catalyzing the cutting and rejoining of the recombining DNA molecules. The XerC-XerD complex is essential to convert dimers of the bacterial chromosome into monomers to permit their segregation at cell division. It also contributes to the segregational stability of plasmids. In Chromobacterium violaceum (strain ATCC 12472 / DSM 30191 / JCM 1249 / CCUG 213 / NBRC 12614 / NCIMB 9131 / NCTC 9757 / MK), this protein is Tyrosine recombinase XerC.